The primary structure comprises 377 residues: MAETQRRPRVYFDIQIGSQKAGRIALELVRLPFNDVVPKTAENFRALCTGEKGVGKQRKPLSYKGSIFHRVIKQFMIQGGDFTNFNGTGGESIYGEKFPDENFELKHDRPFLLSMANSGPGTNGSQFFITTVPTPHLDGKHVVFGEVINGKSIVRKIENMPTQADKPTTDVTIVDCGELSGEDYENATKQVADATGDPYEDYPDDHQGEELNAQVCFKIASELKNFGNTAFKSGDVALGLDKYQKGLRYLNEFPDPDENDPKDLEPQMKSLRFTLHSNSSLLANKLGQYKNAQNWATYALEVADAANAKEADRAKAYYRRAVAYSGQKEEDEALKDLQEALKLAPGDAGILNEIAKVKKAIKDSEAKEKAAARKFFS.

Positions 11 to 178 (YFDIQIGSQK…TDVTIVDCGE (168 aa)) constitute a PPIase cyclophilin-type domain. 3 TPR repeats span residues 220 to 253 (ASEL…LNEF), 273 to 306 (FTLH…ADAA), and 314 to 347 (AKAY…APGD).

This sequence belongs to the cyclophilin-type PPIase family. PPIase D subfamily.

The protein resides in the cytoplasm. It carries out the reaction [protein]-peptidylproline (omega=180) = [protein]-peptidylproline (omega=0). Its function is as follows. PPIases accelerate the folding of proteins. It catalyzes the cis-trans isomerization of proline imidic peptide bonds in oligopeptides. The polypeptide is Peptidyl-prolyl cis-trans isomerase D (cpr6) (Aspergillus fumigatus (strain ATCC MYA-4609 / CBS 101355 / FGSC A1100 / Af293) (Neosartorya fumigata)).